The primary structure comprises 1412 residues: Sister chromatid cohesion protein PDS5 homolog B (1412 aa).

One copy of the HEAT repeat lies at 383 to 419; the sequence is LLVNDHLLNFVRERTLDKRWRVRKEAMMGLAQIYKKY. The disordered stretch occupies residues 1137-1412; that stretch reads PLSSAGKQSQ…RRRTSKRERR (276 aa). Low complexity-rich tracts occupy residues 1139–1149 and 1156–1167; these read SSAGKQSQSKS and SNASSSSNPSSP. 4 stretches are compositionally biased toward basic and acidic residues: residues 1172 to 1184, 1196 to 1212, 1223 to 1241, and 1263 to 1272; these read GRLD…HSEN, KKTD…LEKP, SEEK…DQKL, and QEEKRLKEDV. Residues 1322 to 1331 show a composition bias toward acidic residues; the sequence is VEEEEEEEER. Positions 1350–1362 are enriched in polar residues; that stretch reads RTQQSRAGRSKQA. Positions 1386-1397 are enriched in acidic residues; that stretch reads VPQEEVMEEEEV. The segment covering 1402-1412 has biased composition (basic residues); that stretch reads VRRRTSKRERR.

Interacts with the cohesin complex.

Its subcellular location is the nucleus. Its function is as follows. Plays a role in androgen-induced proliferative arrest. Required for maintenance of sister chromatid cohesion during mitosis. In Gallus gallus (Chicken), this protein is Sister chromatid cohesion protein PDS5 homolog B (PDS5B).